We begin with the raw amino-acid sequence, 108 residues long: Small ribosomal subunit protein bS6 (108 aa).

Belongs to the bacterial ribosomal protein bS6 family.

In terms of biological role, binds together with bS18 to 16S ribosomal RNA. The sequence is that of Small ribosomal subunit protein bS6 from Nostoc sp. (strain PCC 7120 / SAG 25.82 / UTEX 2576).